The following is a 393-amino-acid chain: NAD(P)H-quinone oxidoreductase subunit H, chloroplastic (393 aa).

It belongs to the complex I 49 kDa subunit family. In terms of assembly, NDH is composed of at least 16 different subunits, 5 of which are encoded in the nucleus.

Its subcellular location is the plastid. The protein resides in the chloroplast thylakoid membrane. The catalysed reaction is a plastoquinone + NADH + (n+1) H(+)(in) = a plastoquinol + NAD(+) + n H(+)(out). The enzyme catalyses a plastoquinone + NADPH + (n+1) H(+)(in) = a plastoquinol + NADP(+) + n H(+)(out). Functionally, NDH shuttles electrons from NAD(P)H:plastoquinone, via FMN and iron-sulfur (Fe-S) centers, to quinones in the photosynthetic chain and possibly in a chloroplast respiratory chain. The immediate electron acceptor for the enzyme in this species is believed to be plastoquinone. Couples the redox reaction to proton translocation, and thus conserves the redox energy in a proton gradient. This chain is NAD(P)H-quinone oxidoreductase subunit H, chloroplastic, found in Zygnema circumcarinatum (Green alga).